The following is a 126-amino-acid chain: UPF0102 protein PMT_0624 (126 aa).

The protein belongs to the UPF0102 family.

The chain is UPF0102 protein PMT_0624 from Prochlorococcus marinus (strain MIT 9313).